A 330-amino-acid chain; its full sequence is ADP-L-glycero-D-manno-heptose-6-epimerase (330 aa).

Residues 11–12 (FI), 32–33 (DN), lysine 39, lysine 54, 75–79 (EGACS), and asparagine 92 each bind NADP(+). The Proton acceptor role is filled by tyrosine 139. Lysine 143 contacts NADP(+). Asparagine 168 is a binding site for substrate. Valine 169 and lysine 177 together coordinate NADP(+). The active-site Proton acceptor is lysine 177. Substrate-binding positions include arginine 179, histidine 186, 200 to 203 (FGEY), arginine 213, and tyrosine 292.

The protein belongs to the NAD(P)-dependent epimerase/dehydratase family. HldD subfamily. As to quaternary structure, homopentamer. NADP(+) is required as a cofactor.

It carries out the reaction ADP-D-glycero-beta-D-manno-heptose = ADP-L-glycero-beta-D-manno-heptose. Its pathway is nucleotide-sugar biosynthesis; ADP-L-glycero-beta-D-manno-heptose biosynthesis; ADP-L-glycero-beta-D-manno-heptose from D-glycero-beta-D-manno-heptose 7-phosphate: step 4/4. Catalyzes the interconversion between ADP-D-glycero-beta-D-manno-heptose and ADP-L-glycero-beta-D-manno-heptose via an epimerization at carbon 6 of the heptose. In Burkholderia thailandensis (strain ATCC 700388 / DSM 13276 / CCUG 48851 / CIP 106301 / E264), this protein is ADP-L-glycero-D-manno-heptose-6-epimerase.